The following is a 218-amino-acid chain: Protein-L-isoaspartate O-methyltransferase (218 aa).

S63 is an active-site residue.

This sequence belongs to the methyltransferase superfamily. L-isoaspartyl/D-aspartyl protein methyltransferase family.

The protein resides in the cytoplasm. It catalyses the reaction [protein]-L-isoaspartate + S-adenosyl-L-methionine = [protein]-L-isoaspartate alpha-methyl ester + S-adenosyl-L-homocysteine. Catalyzes the methyl esterification of L-isoaspartyl residues in peptides and proteins that result from spontaneous decomposition of normal L-aspartyl and L-asparaginyl residues. It plays a role in the repair and/or degradation of damaged proteins. The protein is Protein-L-isoaspartate O-methyltransferase of Syntrophus aciditrophicus (strain SB).